The following is a 469-amino-acid chain: Ribulose bisphosphate carboxylase large chain (469 aa).

N6,N6,N6-trimethyllysine is present on Lys-5. Asn-114 and Thr-164 together coordinate substrate. Lys-166 functions as the Proton acceptor in the catalytic mechanism. Lys-168 serves as a coordination point for substrate. 3 residues coordinate Mg(2+): Lys-192, Asp-194, and Glu-195. Lys-192 is modified (N6-carboxylysine). His-285 serves as the catalytic Proton acceptor. Arg-286, His-318, and Ser-370 together coordinate substrate.

The protein belongs to the RuBisCO large chain family. Type I subfamily. Heterohexadecamer of 8 large chains and 8 small chains; disulfide-linked. The disulfide link is formed within the large subunit homodimers. Mg(2+) is required as a cofactor. In terms of processing, the disulfide bond which can form in the large chain dimeric partners within the hexadecamer appears to be associated with oxidative stress and protein turnover.

It is found in the plastid. It localises to the chloroplast. It carries out the reaction 2 (2R)-3-phosphoglycerate + 2 H(+) = D-ribulose 1,5-bisphosphate + CO2 + H2O. The catalysed reaction is D-ribulose 1,5-bisphosphate + O2 = 2-phosphoglycolate + (2R)-3-phosphoglycerate + 2 H(+). Its function is as follows. RuBisCO catalyzes two reactions: the carboxylation of D-ribulose 1,5-bisphosphate, the primary event in carbon dioxide fixation, as well as the oxidative fragmentation of the pentose substrate in the photorespiration process. Both reactions occur simultaneously and in competition at the same active site. This is Ribulose bisphosphate carboxylase large chain from Cephalanthus occidentalis (Common buttonbush).